Consider the following 84-residue polypeptide: Beta-defensin 119 (84 aa).

The first 21 residues, 1–21, serve as a signal peptide directing secretion; that stretch reads MKLLYLFLAILLAIEEPVISG. Disulfide bonds link Cys28/Cys55, Cys35/Cys49, and Cys39/Cys56.

This sequence belongs to the beta-defensin family. In terms of tissue distribution, abundant expression in the male reproductive tract only. Abundant expressed in testis and the caput region of epididymis, but low in the corpus region.

Its subcellular location is the secreted. In terms of biological role, has antibacterial activity. The chain is Beta-defensin 119 (DEFB119) from Homo sapiens (Human).